The chain runs to 251 residues: Probable transcriptional regulatory protein MMAR_2098 (251 aa).

Belongs to the TACO1 family.

The protein localises to the cytoplasm. This chain is Probable transcriptional regulatory protein MMAR_2098, found in Mycobacterium marinum (strain ATCC BAA-535 / M).